A 140-amino-acid chain; its full sequence is Nucleoside diphosphate kinase (140 aa).

6 residues coordinate ATP: Lys11, Phe59, Arg87, Thr93, Arg104, and Asn114. His117 (pros-phosphohistidine intermediate) is an active-site residue.

It belongs to the NDK family. In terms of assembly, homotetramer. Requires Mg(2+) as cofactor.

It is found in the cytoplasm. The catalysed reaction is a 2'-deoxyribonucleoside 5'-diphosphate + ATP = a 2'-deoxyribonucleoside 5'-triphosphate + ADP. It catalyses the reaction a ribonucleoside 5'-diphosphate + ATP = a ribonucleoside 5'-triphosphate + ADP. Major role in the synthesis of nucleoside triphosphates other than ATP. The ATP gamma phosphate is transferred to the NDP beta phosphate via a ping-pong mechanism, using a phosphorylated active-site intermediate. This chain is Nucleoside diphosphate kinase, found in Rickettsia akari (strain Hartford).